The following is a 121-amino-acid chain: Large ribosomal subunit protein uL18 (121 aa).

Belongs to the universal ribosomal protein uL18 family. Part of the 50S ribosomal subunit; part of the 5S rRNA/L5/L18/L25 subcomplex. Contacts the 5S and 23S rRNAs.

Its function is as follows. This is one of the proteins that bind and probably mediate the attachment of the 5S RNA into the large ribosomal subunit, where it forms part of the central protuberance. This chain is Large ribosomal subunit protein uL18, found in Ehrlichia canis (strain Jake).